The following is a 360-amino-acid chain: Protein NDRG2 (360 aa).

Residues 325–360 form a disordered region; that stretch reads RTASLSSEGNRSRSRTLSQSSESGGGPPAPLAEVTC.

Belongs to the NDRG family.

Its subcellular location is the cytoplasm. In terms of biological role, contributes to the regulation of the Wnt signaling pathway. Down-regulates CTNNB1-mediated transcriptional activation of target genes. May be involved in neuron differentiation. The protein is Protein NDRG2 of Xenopus tropicalis (Western clawed frog).